The primary structure comprises 458 residues: Argininosuccinate lyase (458 aa).

The protein belongs to the lyase 1 family. Argininosuccinate lyase subfamily.

It localises to the cytoplasm. The catalysed reaction is 2-(N(omega)-L-arginino)succinate = fumarate + L-arginine. The protein operates within amino-acid biosynthesis; L-arginine biosynthesis; L-arginine from L-ornithine and carbamoyl phosphate: step 3/3. The chain is Argininosuccinate lyase from Salmonella typhimurium (strain LT2 / SGSC1412 / ATCC 700720).